A 261-amino-acid chain; its full sequence is Na(+)-translocating NADH-quinone reductase subunit C (261 aa).

Residues leucine 12–glycine 32 traverse the membrane as a helical segment. Threonine 229 bears the FMN phosphoryl threonine mark.

The protein belongs to the NqrC family. In terms of assembly, composed of six subunits; NqrA, NqrB, NqrC, NqrD, NqrE and NqrF. FMN serves as cofactor.

It localises to the cell inner membrane. The enzyme catalyses a ubiquinone + n Na(+)(in) + NADH + H(+) = a ubiquinol + n Na(+)(out) + NAD(+). In terms of biological role, NQR complex catalyzes the reduction of ubiquinone-1 to ubiquinol by two successive reactions, coupled with the transport of Na(+) ions from the cytoplasm to the periplasm. NqrA to NqrE are probably involved in the second step, the conversion of ubisemiquinone to ubiquinol. This Vibrio parahaemolyticus serotype O3:K6 (strain RIMD 2210633) protein is Na(+)-translocating NADH-quinone reductase subunit C.